Here is a 376-residue protein sequence, read N- to C-terminus: MEVQLTNRQQHILWATVRHYIATAEPVGSKALVEEYDLGVSSATIRNVMGVLEKSGLLYQPHASAGRVPSDSGYRIYVDQLITPSLRSRSVSQTDATRTETLGREIEVALQKHLQWEDRSLETLLQGAAQILATLSGCISLITMPQTTTALLRHLQLVQIEAGRIMLIVVTDGYETHSKLMDLSPIPEETQRDSEVIDRELQIVSNFLNTHLRGRSLLELANLNWSELDQEFQRYGEFLKNSVAELTRRTLAPTATQIMVRGVSEVLRQPEFSQLQQVQTIIHLLEEEQDQLWRLIFEEPEPEDIGKSRVTVRIGAENPLEPIRTCTLISSNYRRGSIPVGSVGVLGPTRLDYESAIAVVASAADYLSEAFSYFNP.

Belongs to the HrcA family.

In terms of biological role, negative regulator of class I heat shock genes (grpE-dnaK-dnaJ and groELS operons). Prevents heat-shock induction of these operons. The chain is Heat-inducible transcription repressor HrcA from Nostoc punctiforme (strain ATCC 29133 / PCC 73102).